The sequence spans 111 residues: Repressed By RIM101 protein 1 (111 aa).

Positions 1–19 (MKFSTTLLALTASIAAVMS) are cleaved as a signal peptide. The disordered stretch occupies residues 71–90 (SGASSATGGSSAAKSGSSSG). Ser-81 carries GPI-anchor amidated serine lipidation. Residues 82-111 (AAKSGSSSGAGFAPVAGAGSLAAIAGLLLL) constitute a propeptide, removed in mature form.

Post-translationally, the GPI-anchor is attached to the protein in the endoplasmic reticulum and serves to target the protein to the cell surface. There, the glucosamine-inositol phospholipid moiety is cleaved off and the GPI-modified mannoprotein is covalently attached via its lipidless GPI glycan remnant to the 1,6-beta-glucan of the outer cell wall layer.

It localises to the secreted. Its subcellular location is the cell wall. The protein resides in the membrane. In terms of biological role, probable cell wall protein required for filamentation at low pH. This Candida albicans (strain SC5314 / ATCC MYA-2876) (Yeast) protein is Repressed By RIM101 protein 1 (RBR1).